Here is a 182-residue protein sequence, read N- to C-terminus: Isopentenyl-diphosphate Delta-isomerase (182 aa).

Positions 25 and 32 each coordinate Mn(2+). The region spanning 30-164 is the Nudix hydrolase domain; sequence LLHLAFSSWL…PWAFSPWMVM (135 aa). The active site involves C67. Residue H69 coordinates Mn(2+). A Mg(2+)-binding site is contributed by E87. Residues E114 and E116 each contribute to the Mn(2+) site. E116 is an active-site residue.

Belongs to the IPP isomerase type 1 family. Homodimer. The cofactor is Mg(2+). Mn(2+) serves as cofactor.

The protein resides in the cytoplasm. The enzyme catalyses isopentenyl diphosphate = dimethylallyl diphosphate. It functions in the pathway isoprenoid biosynthesis; dimethylallyl diphosphate biosynthesis; dimethylallyl diphosphate from isopentenyl diphosphate: step 1/1. Catalyzes the 1,3-allylic rearrangement of the homoallylic substrate isopentenyl (IPP) to its highly electrophilic allylic isomer, dimethylallyl diphosphate (DMAPP). In Escherichia coli (strain ATCC 8739 / DSM 1576 / NBRC 3972 / NCIMB 8545 / WDCM 00012 / Crooks), this protein is Isopentenyl-diphosphate Delta-isomerase.